A 333-amino-acid chain; its full sequence is NAC domain-containing protein 26 (333 aa).

The NAC domain maps to 14-173 (LPPGFRFHPT…DWAVCRIFHK (160 aa)). Residues 114–179 (IGMKKTLVFY…IFHKSSGIKK (66 aa)) mediate DNA binding. The segment at 143–162 (ADASPPQPPPPPSSAEPPRQ) is disordered. Residues 147-157 (PPQPPPPPSSA) are compositionally biased toward pro residues.

In terms of assembly, forms homodimers. Forms heterodimers with NAC20. Forms heterodimers with NAC23. Expressed in developing seeds.

It localises to the nucleus. Its function is as follows. Transcription factor that acts redundantly with NAC20 to regulate the expression of genes involved in the biosynthesis of starch and storage proteins in grain. Directly binds to the promoters of starch synthase 1 (SS1), pullulanase (PUL), glutelin A1 (GLUA1), glutelins B4 and B5 (GLUB4 and GLUB5), alpha-globulin and 16 kDa prolamin, and activates their expression. Possesses transactivation activity in yeast. The sequence is that of NAC domain-containing protein 26 from Oryza sativa subsp. indica (Rice).